A 1166-amino-acid polypeptide reads, in one-letter code: ATP-dependent helicase/deoxyribonuclease subunit B (1166 aa).

The UvrD-like helicase ATP-binding domain maps to 1 to 278; sequence MGAEFLVGRS…LNLDITYKEL (278 aa). Positions 10, 11, 14, 15, 16, 236, and 283 each coordinate ATP. One can recognise a UvrD-like helicase C-terminal domain in the interval 281 to 586; the sequence is TERHTKTPEL…TFSLIPPALD (306 aa). [4Fe-4S] cluster-binding residues include Cys-801, Cys-1121, Cys-1124, and Cys-1130.

The protein belongs to the helicase family. AddB/RexB type 1 subfamily. Heterodimer of AddA and AddB. Requires At low magnesium concentrations there is no nuclease activity, but helicase activity is unaffected. as cofactor. The cofactor is Mg(2+). [4Fe-4S] cluster serves as cofactor.

The heterodimer acts both as a highly processive, ATP-dependent DNA helicase and as an ATP-dependent single-stranded exonuclease, acting in both directions. Recognizes the B.subtilis Chi site (5'-AGCGG-3') which transforms the enzyme from a helicase which degrades both DNA strands to one with only 5' to 3' exonuclease activity. This generates a double-stranded DNA with a protruding 3'-terminated single-stranded tail suitable for the initiation of homologous recombination (Chi fragment). The AddB nuclease domain is not required for Chi fragment generation but for recognition of the Chi site; this subunit has 5' -&gt; 3' nuclease activity but no helicase activity. The helicase activity of isolated AddA acts on 3'-tailed substrate and requires AddB to bind to blunt-ended DNA. RecA thread formation during DNA double-strand break repair requires RecJ or AddAB. The polypeptide is ATP-dependent helicase/deoxyribonuclease subunit B (Bacillus subtilis (strain 168)).